Consider the following 764-residue polypeptide: Elongation factor G, mitochondrial (764 aa).

A mitochondrion-targeting transit peptide spans 1-23 (MIRSLRAVSRLGARGFSSFAAAR). The 282-residue stretch at 56–337 (ARMRNIGISA…AICEYLPDPS (282 aa)) folds into the tr-type G domain. Residues 65–72 (AHIDSGKT), 136–140 (DTPGH), and 190–193 (NKMD) each bind GTP.

It belongs to the TRAFAC class translation factor GTPase superfamily. Classic translation factor GTPase family. EF-G/EF-2 subfamily.

The protein localises to the mitochondrion. It participates in protein biosynthesis; polypeptide chain elongation. In terms of biological role, mitochondrial GTPase that catalyzes the GTP-dependent ribosomal translocation step during translation elongation. During this step, the ribosome changes from the pre-translocational (PRE) to the post-translocational (POST) state as the newly formed A-site-bound peptidyl-tRNA and P-site-bound deacylated tRNA move to the P and E sites, respectively. Catalyzes the coordinated movement of the two tRNA molecules, the mRNA and conformational changes in the ribosome. This Yarrowia lipolytica (strain CLIB 122 / E 150) (Yeast) protein is Elongation factor G, mitochondrial.